The chain runs to 191 residues: Threonylcarbamoyl-AMP synthase (191 aa).

One can recognise a YrdC-like domain in the interval 10–191 (VPKLTQCVRT…DLYTDAIIRA (182 aa)).

It belongs to the SUA5 family. TsaC subfamily.

The protein resides in the cytoplasm. It catalyses the reaction L-threonine + hydrogencarbonate + ATP = L-threonylcarbamoyladenylate + diphosphate + H2O. Its function is as follows. Required for the formation of a threonylcarbamoyl group on adenosine at position 37 (t(6)A37) in tRNAs that read codons beginning with adenine. Catalyzes the conversion of L-threonine, HCO(3)(-)/CO(2) and ATP to give threonylcarbamoyl-AMP (TC-AMP) as the acyladenylate intermediate, with the release of diphosphate. This chain is Threonylcarbamoyl-AMP synthase, found in Saccharophagus degradans (strain 2-40 / ATCC 43961 / DSM 17024).